The chain runs to 314 residues: Serine protease 46 (314 aa).

Residues 44–281 (VVNGKVVEVG…FTQWIKRQIG (238 aa)) form the Peptidase S1 domain. Residues Cys69 and Cys85 are joined by a disulfide bond. Active-site charge relay system residues include His84 and Asp130. 3 disulfide bridges follow: Cys164/Cys239, Cys197/Cys219, and Cys229/Cys257. Catalysis depends on Ser233, which acts as the Charge relay system. Residues 293-313 (FLSPFILTGYILLVSLGSLWL) form a helical membrane-spanning segment.

Belongs to the peptidase S1 family.

The protein resides in the membrane. This Rattus norvegicus (Rat) protein is Serine protease 46 (Prss46).